Reading from the N-terminus, the 285-residue chain is Shikimate dehydrogenase (NADP(+)) (285 aa).

Shikimate-binding positions include 20 to 22 (SIS) and serine 67. The active-site Proton acceptor is lysine 71. Residue glutamate 83 participates in NADP(+) binding. Shikimate-binding residues include asparagine 92 and aspartate 107. NADP(+)-binding positions include 129–133 (GAGGA) and methionine 227. A shikimate-binding site is contributed by tyrosine 229. Glycine 250 lines the NADP(+) pocket.

It belongs to the shikimate dehydrogenase family. Homodimer.

The catalysed reaction is shikimate + NADP(+) = 3-dehydroshikimate + NADPH + H(+). Its pathway is metabolic intermediate biosynthesis; chorismate biosynthesis; chorismate from D-erythrose 4-phosphate and phosphoenolpyruvate: step 4/7. In terms of biological role, involved in the biosynthesis of the chorismate, which leads to the biosynthesis of aromatic amino acids. Catalyzes the reversible NADPH linked reduction of 3-dehydroshikimate (DHSA) to yield shikimate (SA). This Streptococcus gordonii (strain Challis / ATCC 35105 / BCRC 15272 / CH1 / DL1 / V288) protein is Shikimate dehydrogenase (NADP(+)).